The sequence spans 239 residues: TPR repeat-containing protein TP_0282 (239 aa).

Residues 21 to 43 (LLVGVLVAILGGLGLSAGCLLVM) traverse the membrane as a helical segment. TPR repeat units follow at residues 112–145 (AYAQ…ARRS) and 149–182 (GVYY…QDFP).

The protein resides in the cell membrane. This is TPR repeat-containing protein TP_0282 from Treponema pallidum (strain Nichols).